The following is a 325-amino-acid chain: Biotin synthase (325 aa).

Residues 36–254 enclose the Radical SAM core domain; that stretch reads NEVQLAMLLS…IALARIMFPK (219 aa). 3 residues coordinate [4Fe-4S] cluster: C51, C55, and C58. [2Fe-2S] cluster is bound by residues C95, C126, C186, and R258.

This sequence belongs to the radical SAM superfamily. Biotin synthase family. In terms of assembly, homodimer. [4Fe-4S] cluster serves as cofactor. The cofactor is [2Fe-2S] cluster.

It carries out the reaction (4R,5S)-dethiobiotin + (sulfur carrier)-SH + 2 reduced [2Fe-2S]-[ferredoxin] + 2 S-adenosyl-L-methionine = (sulfur carrier)-H + biotin + 2 5'-deoxyadenosine + 2 L-methionine + 2 oxidized [2Fe-2S]-[ferredoxin]. It participates in cofactor biosynthesis; biotin biosynthesis; biotin from 7,8-diaminononanoate: step 2/2. Functionally, catalyzes the conversion of dethiobiotin (DTB) to biotin by the insertion of a sulfur atom into dethiobiotin via a radical-based mechanism. This is Biotin synthase from Neorickettsia sennetsu (strain ATCC VR-367 / Miyayama) (Ehrlichia sennetsu).